The following is a 1270-amino-acid chain: DNA-directed RNA polymerase subunit beta (1270 aa).

This sequence belongs to the RNA polymerase beta chain family. In terms of assembly, the RNAP catalytic core consists of 2 alpha, 1 beta, 1 beta' and 1 omega subunit. When a sigma factor is associated with the core the holoenzyme is formed, which can initiate transcription.

It carries out the reaction RNA(n) + a ribonucleoside 5'-triphosphate = RNA(n+1) + diphosphate. Its function is as follows. DNA-dependent RNA polymerase catalyzes the transcription of DNA into RNA using the four ribonucleoside triphosphates as substrates. In Flavobacterium johnsoniae (strain ATCC 17061 / DSM 2064 / JCM 8514 / BCRC 14874 / CCUG 350202 / NBRC 14942 / NCIMB 11054 / UW101) (Cytophaga johnsonae), this protein is DNA-directed RNA polymerase subunit beta.